Here is a 335-residue protein sequence, read N- to C-terminus: ATP-dependent 6-phosphofructokinase (335 aa).

Residue G11 coordinates ATP. 21 to 25 provides a ligand contact to ADP; that stretch reads RAVVR. Residues 72-73 and 102-105 contribute to the ATP site; these read RY and GDGS. D103 provides a ligand contact to Mg(2+). 125-127 is a substrate binding site; that stretch reads TID. D127 functions as the Proton acceptor in the catalytic mechanism. R154 serves as a coordination point for ADP. Residues R162 and 169 to 171 each bind substrate; that span reads MGR. Residues 185–187 and 213–215 contribute to the ADP site; these read GAD and KKH. Residues E222, R244, and 250 to 253 each bind substrate; that span reads HIQR.

This sequence belongs to the phosphofructokinase type A (PFKA) family. ATP-dependent PFK group I subfamily. Prokaryotic clade 'B1' sub-subfamily. As to quaternary structure, homotetramer. Mg(2+) is required as a cofactor.

Its subcellular location is the cytoplasm. The catalysed reaction is beta-D-fructose 6-phosphate + ATP = beta-D-fructose 1,6-bisphosphate + ADP + H(+). It functions in the pathway carbohydrate degradation; glycolysis; D-glyceraldehyde 3-phosphate and glycerone phosphate from D-glucose: step 3/4. Its activity is regulated as follows. Allosterically activated by ADP and other diphosphonucleosides, and allosterically inhibited by phosphoenolpyruvate. Its function is as follows. Catalyzes the phosphorylation of D-fructose 6-phosphate to fructose 1,6-bisphosphate by ATP, the first committing step of glycolysis. In Streptococcus pneumoniae (strain CGSP14), this protein is ATP-dependent 6-phosphofructokinase.